The following is a 393-amino-acid chain: Pyruvate dehydrogenase E1 component subunit alpha-2, mitochondrial (393 aa).

The transit peptide at 1-28 directs the protein to the mitochondrion; sequence MALSRLSSRSNTFLKPAITALPSSIRRH. The pyruvate site is built by His94, Tyr120, Arg121, Gly169, Val171, Asp200, Gly201, Ala202, Asn229, and Tyr231. Residues Tyr120, Arg121, Gly169, Val171, Asp200, Gly201, Ala202, and Asn229 each coordinate thiamine diphosphate. Mg(2+) is bound at residue Asp200. Mg(2+) is bound by residues Asn229 and Tyr231. His295 is a binding site for thiamine diphosphate.

As to quaternary structure, tetramer of 2 alpha and 2 beta subunits. It depends on thiamine diphosphate as a cofactor. Mg(2+) serves as cofactor.

Its subcellular location is the mitochondrion matrix. It carries out the reaction N(6)-[(R)-lipoyl]-L-lysyl-[protein] + pyruvate + H(+) = N(6)-[(R)-S(8)-acetyldihydrolipoyl]-L-lysyl-[protein] + CO2. E1 activity is regulated by phosphorylation (inactivation) and dephosphorylation (activation) of the alpha subunit. Functionally, the pyruvate dehydrogenase complex catalyzes the overall conversion of pyruvate to acetyl-CoA and CO(2). It contains multiple copies of three enzymatic components: pyruvate dehydrogenase (E1), dihydrolipoamide acetyltransferase (E2) and lipoamide dehydrogenase (E3). The chain is Pyruvate dehydrogenase E1 component subunit alpha-2, mitochondrial (IAR4) from Arabidopsis thaliana (Mouse-ear cress).